Reading from the N-terminus, the 400-residue chain is Serine/threonine transporter SstT (400 aa).

9 helical membrane-spanning segments follow: residues 9 to 29 (LVTQIAIAVVIGIVLAAVWPA), 36 to 56 (ILGSLFISALKAVAPVLVFVL), 75 to 95 (VLVLYAVGTLAAATVGVVASM), 134 to 154 (ALLEANYIGILAWAIALGLAL), 175 to 195 (VIQLVIRLAPLGILGLVASTF), 209 to 229 (LLAVLLGCMLFVALVVNPLIV), 281 to 301 (IAIPLGATINMAGAAITISVL), 323 to 343 (VVASLCACGASGVAGGSLLLI), and 349 to 369 (LFGIGNDVAMQVVAIGFIIGI).

Belongs to the dicarboxylate/amino acid:cation symporter (DAACS) (TC 2.A.23) family.

Its subcellular location is the cell inner membrane. The catalysed reaction is L-serine(in) + Na(+)(in) = L-serine(out) + Na(+)(out). It carries out the reaction L-threonine(in) + Na(+)(in) = L-threonine(out) + Na(+)(out). Involved in the import of serine and threonine into the cell, with the concomitant import of sodium (symport system). The chain is Serine/threonine transporter SstT from Acidovorax sp. (strain JS42).